The chain runs to 277 residues: S-formylglutathione hydrolase FrmB (277 aa).

Active-site charge relay system residues include S145, D221, and H254.

The protein belongs to the esterase D family.

The enzyme catalyses S-formylglutathione + H2O = formate + glutathione + H(+). Its function is as follows. Serine hydrolase involved in the detoxification of formaldehyde. Hydrolyzes S-formylglutathione to glutathione and formate. This is S-formylglutathione hydrolase FrmB (frmB) from Escherichia coli (strain K12 / DH10B).